Reading from the N-terminus, the 150-residue chain is Arginine repressor (150 aa).

It belongs to the ArgR family.

It is found in the cytoplasm. The protein operates within amino-acid biosynthesis; L-arginine biosynthesis [regulation]. Functionally, regulates arginine biosynthesis genes. The polypeptide is Arginine repressor (Clostridium botulinum (strain Okra / Type B1)).